A 242-amino-acid chain; its full sequence is Small ribosomal subunit protein uS2 (242 aa).

This sequence belongs to the universal ribosomal protein uS2 family.

The protein is Small ribosomal subunit protein uS2 of Pseudoalteromonas translucida (strain TAC 125).